The chain runs to 188 residues: Ribosome-recycling factor (188 aa).

It belongs to the RRF family.

It is found in the cytoplasm. Its function is as follows. Responsible for the release of ribosomes from messenger RNA at the termination of protein biosynthesis. May increase the efficiency of translation by recycling ribosomes from one round of translation to another. In Caulobacter vibrioides (strain NA1000 / CB15N) (Caulobacter crescentus), this protein is Ribosome-recycling factor.